Here is a 150-residue protein sequence, read N- to C-terminus: 3-dehydroquinate dehydratase (150 aa).

Residue tyrosine 26 is the Proton acceptor of the active site. Residues asparagine 75, histidine 81, and aspartate 88 each contribute to the substrate site. The active-site Proton donor is the histidine 101. Residues 102 to 103 and arginine 112 contribute to the substrate site; that span reads LS.

This sequence belongs to the type-II 3-dehydroquinase family. In terms of assembly, homododecamer.

It carries out the reaction 3-dehydroquinate = 3-dehydroshikimate + H2O. It functions in the pathway metabolic intermediate biosynthesis; chorismate biosynthesis; chorismate from D-erythrose 4-phosphate and phosphoenolpyruvate: step 3/7. Catalyzes a trans-dehydration via an enolate intermediate. The chain is 3-dehydroquinate dehydratase from Shewanella loihica (strain ATCC BAA-1088 / PV-4).